Here is a 389-residue protein sequence, read N- to C-terminus: MPLPTSPLRLAMVAGEPSGDLLAASMLDGLAARLPDTTQYFGIGGPRMIAKGFDAHFAMEKLSVRGYVEALKHVPEILGIRNELKRQLLAEPPSAFIGVDAPDFNFGLEHPLRDAGIPTIHFVCPSIWAWRGGRIKKIVKAVDHMLCVFPFEKALLEKSGVTATYVGHPLADEIPLEPDTAGARLELGLPESGPVIAVLPGSRRSEIALIGPTFFDAMELMLQREPGVRFVMPAATPALRELLKPLVDAHANLPLTLTDGNAQRAMTAADAILVKSGTVTLEAALLKKPMVISYKVPWLTGQIMRRQGYLPYVGLPNILAGRFVVPEILQHFATPEALADATLTQLRDDANRRTLTEIFTEMHHVLKQNTAQRAAEAVVGVIEARRGRP.

This sequence belongs to the LpxB family.

It carries out the reaction a lipid X + a UDP-2-N,3-O-bis[(3R)-3-hydroxyacyl]-alpha-D-glucosamine = a lipid A disaccharide + UDP + H(+). Its pathway is bacterial outer membrane biogenesis; LPS lipid A biosynthesis. Its function is as follows. Condensation of UDP-2,3-diacylglucosamine and 2,3-diacylglucosamine-1-phosphate to form lipid A disaccharide, a precursor of lipid A, a phosphorylated glycolipid that anchors the lipopolysaccharide to the outer membrane of the cell. This chain is Lipid-A-disaccharide synthase, found in Paraburkholderia phymatum (strain DSM 17167 / CIP 108236 / LMG 21445 / STM815) (Burkholderia phymatum).